The following is a 130-amino-acid chain: HTH-type transcriptional repressor YtrA (130 aa).

In terms of domain architecture, HTH gntR-type spans 10–78; it reads TPIYEQIIQQ…RGRGTYISEN (69 aa). A DNA-binding region (H-T-H motif) is located at residues 38–57; sequence VRELATIIIANPNTVSKAYK.

Its function is as follows. Negatively regulates ABC transporter complex ytrBCDEF that plays a role in acetoin utilization during stationary phase and sporulation. The sequence is that of HTH-type transcriptional repressor YtrA (ytrA) from Bacillus subtilis (strain 168).